The primary structure comprises 397 residues: Acetate kinase (397 aa).

Position 8 (Asn-8) interacts with Mg(2+). Lys-15 is a binding site for ATP. A substrate-binding site is contributed by Arg-89. The active-site Proton donor/acceptor is the Asp-146. ATP contacts are provided by residues 206–210, 281–283, and 328–332; these read HIGNG, DLR, and GVGEN. Glu-381 serves as a coordination point for Mg(2+).

The protein belongs to the acetokinase family. Homodimer. Mg(2+) is required as a cofactor. Mn(2+) serves as cofactor.

It is found in the cytoplasm. It carries out the reaction acetate + ATP = acetyl phosphate + ADP. It functions in the pathway metabolic intermediate biosynthesis; acetyl-CoA biosynthesis; acetyl-CoA from acetate: step 1/2. Functionally, catalyzes the formation of acetyl phosphate from acetate and ATP. Can also catalyze the reverse reaction. The polypeptide is Acetate kinase (Oceanobacillus iheyensis (strain DSM 14371 / CIP 107618 / JCM 11309 / KCTC 3954 / HTE831)).